The chain runs to 311 residues: Glycine-betaine-binding protein (311 aa).

Positions 1 to 23 (MNRLIRSLCLACAGLFAAGLAQA) are cleaved as a signal peptide.

Belongs to the OsmX family.

The protein localises to the periplasm. In terms of biological role, binds glycine-betaine. The polypeptide is Glycine-betaine-binding protein (Pseudomonas aeruginosa (strain ATCC 15692 / DSM 22644 / CIP 104116 / JCM 14847 / LMG 12228 / 1C / PRS 101 / PAO1)).